The chain runs to 258 residues: Ubiquinone/menaquinone biosynthesis C-methyltransferase UbiE (258 aa).

S-adenosyl-L-methionine-binding positions include T81, D102, and 130 to 131 (NA).

This sequence belongs to the class I-like SAM-binding methyltransferase superfamily. MenG/UbiE family.

It carries out the reaction a 2-demethylmenaquinol + S-adenosyl-L-methionine = a menaquinol + S-adenosyl-L-homocysteine + H(+). It catalyses the reaction a 2-methoxy-6-(all-trans-polyprenyl)benzene-1,4-diol + S-adenosyl-L-methionine = a 5-methoxy-2-methyl-3-(all-trans-polyprenyl)benzene-1,4-diol + S-adenosyl-L-homocysteine + H(+). The protein operates within quinol/quinone metabolism; menaquinone biosynthesis; menaquinol from 1,4-dihydroxy-2-naphthoate: step 2/2. Its pathway is cofactor biosynthesis; ubiquinone biosynthesis. Methyltransferase required for the conversion of demethylmenaquinol (DMKH2) to menaquinol (MKH2) and the conversion of 2-polyprenyl-6-methoxy-1,4-benzoquinol (DDMQH2) to 2-polyprenyl-3-methyl-6-methoxy-1,4-benzoquinol (DMQH2). The sequence is that of Ubiquinone/menaquinone biosynthesis C-methyltransferase UbiE from Rhizobium meliloti (strain 1021) (Ensifer meliloti).